A 522-amino-acid polypeptide reads, in one-letter code: 4-chlorobenzoate--CoA ligase (522 aa).

Residues 161 to 169 (TSGTTGLPK), 300 to 305 (DIYGTT), and Asn-410 each bind ATP.

Belongs to the ATP-dependent AMP-binding enzyme family. As to quaternary structure, homodimer. It depends on Mg(2+) as a cofactor.

It catalyses the reaction 4-chlorobenzoate + ATP + CoA = 4-chlorobenzoyl-CoA + AMP + diphosphate. It functions in the pathway xenobiotic degradation; 4-chlorobenzoate degradation; 4-hydroxybenzoate from 4-chlorobenzoate: step 2/3. In terms of biological role, catalyzes the formation of chlorobenzoyl-CoA via a 2 step reaction. First 4-chlorobenzoate is adenylated by ATP, followed by acyl transfer from the 4-chlorobenzoyl-AMP intermediate to CoA. Benzoate, 4-bromobenzoate, 4-iodobenzoate and 4-fluorobenzoate also act as substrates. Inactive towards 4-nitrobenzoate. The sequence is that of 4-chlorobenzoate--CoA ligase from Arthrobacter sp.